An 815-amino-acid polypeptide reads, in one-letter code: Sodium/hydrogen exchanger 1 (815 aa).

Topologically, residues 1 to 98 are extracellular; that stretch reads MVLRSGICGL…FPVLGIDYTH (98 aa). Thr-42 is a glycosylation site (O-linked (GalNAc...) threonine). Residues 42 to 79 form a disordered region; that stretch reads TASTIRSSEPPRERSIGDVTTAPPEVTPESRPVNHSVT. O-linked (GalNAc...) serine glycosylation occurs at Ser-56. O-linked (GalNAc...) threonine glycosylation is found at Thr-61, Thr-62, and Thr-68. Asn-75 is a glycosylation site (N-linked (GlcNAc...) asparagine). A helical transmembrane segment spans residues 99–121; sequence VRTPFEISLWILLACLMKIGFHV. The Cytoplasmic portion of the chain corresponds to 122–130; sequence IPTISSIVP. Residues 131–148 form a helical membrane-spanning segment; it reads ESCLLIVVGLLVGGLIKG. Over 149–158 the chain is Extracellular; the sequence is VGETPPFLQS. Residues 159–176 form a helical membrane-spanning segment; sequence DVFFLFLLPPIILDAGYF. At 177–186 the chain is on the cytoplasmic side; the sequence is LPLRQFTENL. Residues 187 to 215 form a helical membrane-spanning segment; sequence GTILIFAVVGTLWNAFFLGGLMYAVCLVG. Over 216 to 222 the chain is Extracellular; the sequence is GEQINNI. A helical membrane pass occupies residues 223 to 249; the sequence is GLLDNLLFGSIISAVDPVAVLAVFEEI. Residues 250-252 are Cytoplasmic-facing; the sequence is HIN. Residues 253–283 traverse the membrane as a helical segment; sequence ELLHILVFGESLLNDAVTVVLYHLFEEFANY. The Extracellular portion of the chain corresponds to 284–287; it reads EHVG. A helical transmembrane segment spans residues 288-322; the sequence is IVDIFLGFLSFFVVALGGVLVGVVYGVIAAFTSRF. The Cytoplasmic segment spans residues 323–328; that stretch reads TSHIRV. Residues 329–341 form a helical membrane-spanning segment; the sequence is IEPLFVFLYSYMA. The Extracellular segment spans residues 342-350; sequence YLSAELFHL. Residues 351–371 traverse the membrane as a helical segment; it reads SGIMALIASGVVMRPYVEANI. Residues 372 to 373 are Cytoplasmic-facing; sequence SH. Residues 374–404 traverse the membrane as a helical segment; it reads KSHTTIKYFLKMWSSVSETLIFIFLGVSTVA. The Extracellular segment spans residues 405–410; it reads GSHHWN. The helical transmembrane segment at 411-438 threads the bilayer; sequence WTFVISTLLFCLIARVLGVLGLTWFINK. Residues 439 to 444 are Cytoplasmic-facing; the sequence is FRIVKL. The helical transmembrane segment at 445–469 threads the bilayer; that stretch reads TPKDQFIIAYGGLRGAIAFSLGYLL. At 470-475 the chain is on the extracellular side; that stretch reads DKKHFP. The chain crosses the membrane as a helical span at residues 476–505; sequence MCDLFLTAIITVIFFTVFVQGMTIRPLVDL. An interaction with TESC region spans residues 503-545; that stretch reads VDLLAVKKKQETKRSINEEIHTQFLDHLLTGIEDICGHYGHHH. Over 506-815 the chain is Cytoplasmic; sequence LAVKKKQETK…EGEPFFPKGQ (310 aa). The tract at residues 509 to 516 is PI(4,5)P2-binding region; the sequence is KKKQETKR. Residues 515–545 form an interaction with CHP2 region; it reads KRSINEEIHTQFLDHLLTGIEDICGHYGHHH. A confers pH-dependent PI(4,5)P2 binding region spans residues 540–545; sequence HYGHHH. Residues 552 to 560 form a PI(4,5)P2-binding region region; sequence RFNKKYVKK. A phosphoserine mark is found at Ser-599 and Ser-602. Phosphothreonine is present on Thr-603. Phosphoserine is present on residues Ser-605 and Ser-648. Residues 633–815 are interaction with TESC; sequence KILRNNLQKT…EGEPFFPKGQ (183 aa). The interaction with CALM1 stretch occupies residues 633 to 815; the sequence is KILRNNLQKT…EGEPFFPKGQ (183 aa). Residues 684-687 form an interaction with PPP3CA region; the sequence is LTVP. A phosphoserine mark is found at Ser-693, Ser-697, and Ser-703. Positions 715–720 are interaction with PPP3CA; that stretch reads PVITID. 3 positions are modified to phosphoserine: Ser-723, Ser-726, and Ser-729. The segment at 744–815 is disordered; sequence LSRDPAKVAE…EGEPFFPKGQ (72 aa). The residue at position 779 (Thr-779) is a Phosphothreonine. Polar residues predominate over residues 782 to 791; it reads PSDSPSSQRI. Residues Ser-785, Ser-787, and Ser-796 each carry the phosphoserine modification.

This sequence belongs to the monovalent cation:proton antiporter 1 (CPA1) transporter (TC 2.A.36) family. As to quaternary structure, homodimer; dimerization is crucial for its function. Oligomer. Interacts with CALM1 in a calcium-dependent manner. Interacts with TESC. Interacts (via the C-terminal domain) with CHP1; the interaction occurs at the plasma membrane in a calcium-dependent manner and facilitates the maturation, cell surface expression, and function of SLC9A3. Interacts with CHP2; the interaction occurs in a calcium-dependent manner. Interacts with EZR; regulates the cytoskeletal interactions of SLC9A1 and promotes stress fiber formation. In terms of processing, O-glycosylated. Post-translationally, ubiquitinated, leading to its degradation by the proteasome. Ubiquitination is reduced by CHP1. Phosphorylation at Thr-779 increases SLC9A1 activity. Specifically dephosphorylated at Thr-779 by PPP3CA that negatively regulates SLC9A1 activity. Phosphorylation at Ser-648 by AKT1 reduces SLC9A1 binding to CALM1. In terms of processing, palmitoylated; may play a major role in SLC9A1 regulation. In terms of tissue distribution, kidney and intestine.

It is found in the cell membrane. It localises to the basolateral cell membrane. The catalysed reaction is Na(+)(in) + H(+)(out) = Na(+)(out) + H(+)(in). It catalyses the reaction Li(+)(out) + H(+)(in) = Li(+)(in) + H(+)(out). The enzyme catalyses Li(+)(in) + Na(+)(out) = Li(+)(out) + Na(+)(in). With respect to regulation, activated at acidic pHs. Inhibited by amiloride and 5-amino-substituted derivatives. Inhibited by cariporide and eniporide. Phosphatidylinositol 4,5-bisphosphate (PI(4,5)P2) and phosphatidylinositol 3,4,5-trisphosphate (PI(3,4,5)P3) bind and differentially regulate SLC9A1 activity. Its function is as follows. Electroneutral Na(+) /H(+) antiporter that extrudes Na(+) in exchange for external protons driven by the inward sodium ion chemical gradient, protecting cells from acidification that occurs from metabolism. Exchanges intracellular H(+) ions for extracellular Na(+) in 1:1 stoichiometry. Plays a key role in maintening intracellular pH neutral and cell volume, and thus is important for cell growth, proliferation, migration and survival. In addition, can transport lithium Li(+) and also functions as a Na(+)/Li(+) antiporter. SLC9A1 also functions in membrane anchoring and organization of scaffolding complexes that coordinate signaling inputs. This chain is Sodium/hydrogen exchanger 1, found in Homo sapiens (Human).